We begin with the raw amino-acid sequence, 339 residues long: Anthranilate phosphoribosyltransferase (339 aa).

5-phospho-alpha-D-ribose 1-diphosphate-binding positions include Gly79, 82–83 (GD), Ser87, 89–92 (NIST), 107–115 (KHGNRSISS), and Ser119. Gly79 contributes to the anthranilate binding site. Ser91 is a binding site for Mg(2+). An anthranilate-binding site is contributed by Asn110. Anthranilate is bound at residue Arg165. Mg(2+) is bound by residues Asp224 and Glu225.

Belongs to the anthranilate phosphoribosyltransferase family. As to quaternary structure, homodimer. Mg(2+) is required as a cofactor.

It catalyses the reaction N-(5-phospho-beta-D-ribosyl)anthranilate + diphosphate = 5-phospho-alpha-D-ribose 1-diphosphate + anthranilate. It participates in amino-acid biosynthesis; L-tryptophan biosynthesis; L-tryptophan from chorismate: step 2/5. Catalyzes the transfer of the phosphoribosyl group of 5-phosphorylribose-1-pyrophosphate (PRPP) to anthranilate to yield N-(5'-phosphoribosyl)-anthranilate (PRA). The protein is Anthranilate phosphoribosyltransferase of Listeria monocytogenes serovar 1/2a (strain ATCC BAA-679 / EGD-e).